We begin with the raw amino-acid sequence, 72 residues long: SRY-related protein ADW2 (72 aa).

A DNA-binding region (HMG box) is located at residues 1–69 (VKRPMNAFMV…KHMADYADYK (69 aa)).

It is found in the nucleus. This chain is SRY-related protein ADW2, found in Alligator mississippiensis (American alligator).